The chain runs to 107 residues: Large ribosomal subunit protein eL33 (107 aa).

Belongs to the eukaryotic ribosomal protein eL33 family. Component of the large ribosomal subunit. Mature ribosomes consist of a small (40S) and a large (60S) subunit. The 40S subunit contains about 32 different proteins and 1 molecule of RNA (18S). The 60S subunit contains 45 different proteins and 3 molecules of RNA (25S, 5.8S and 5S).

It is found in the cytoplasm. Component of the ribosome, a large ribonucleoprotein complex responsible for the synthesis of proteins in the cell. The small ribosomal subunit (SSU) binds messenger RNAs (mRNAs) and translates the encoded message by selecting cognate aminoacyl-transfer RNA (tRNA) molecules. The large subunit (LSU) contains the ribosomal catalytic site termed the peptidyl transferase center (PTC), which catalyzes the formation of peptide bonds, thereby polymerizing the amino acids delivered by tRNAs into a polypeptide chain. The nascent polypeptides leave the ribosome through a tunnel in the LSU and interact with protein factors that function in enzymatic processing, targeting, and the membrane insertion of nascent chains at the exit of the ribosomal tunnel. This Candida albicans (strain SC5314 / ATCC MYA-2876) (Yeast) protein is Large ribosomal subunit protein eL33.